The primary structure comprises 244 residues: Uridylate kinase (244 aa).

An ATP-binding site is contributed by 18–21; sequence KISG. The interval 26 to 31 is involved in allosteric activation by GTP; the sequence is GDQGYG. Residue G60 participates in UMP binding. ATP-binding residues include G61 and R65. UMP-binding positions include D80 and 141–148; that span reads TGNPYFTT. Positions 168, 174, and 177 each coordinate ATP.

It belongs to the UMP kinase family. As to quaternary structure, homohexamer.

It is found in the cytoplasm. It catalyses the reaction UMP + ATP = UDP + ADP. The protein operates within pyrimidine metabolism; CTP biosynthesis via de novo pathway; UDP from UMP (UMPK route): step 1/1. Allosterically activated by GTP. Inhibited by UTP. Functionally, catalyzes the reversible phosphorylation of UMP to UDP. The protein is Uridylate kinase of Paracoccus denitrificans (strain Pd 1222).